Here is a 598-residue protein sequence, read N- to C-terminus: Eukaryotic translation initiation factor 3 subunit D (598 aa).

Positions V104 to S178 are disordered. The segment covering F109–G132 has biased composition (gly residues). A compositionally biased stretch (basic and acidic residues) spans G165–D177. The segment at S304–P318 is RNA gate. The segment at N574–E598 is disordered. Acidic residues predominate over residues D589–E598.

Belongs to the eIF-3 subunit D family. In terms of assembly, component of the eukaryotic translation initiation factor 3 (eIF-3) complex.

The protein resides in the cytoplasm. MRNA cap-binding component of the eukaryotic translation initiation factor 3 (eIF-3) complex, which is involved in protein synthesis of a specialized repertoire of mRNAs and, together with other initiation factors, stimulates binding of mRNA and methionyl-tRNAi to the 40S ribosome. The eIF-3 complex specifically targets and initiates translation of a subset of mRNAs involved in cell proliferation. In the eIF-3 complex, eif3d specifically recognizes and binds the 7-methylguanosine cap of a subset of mRNAs. This Coccidioides immitis (strain RS) (Valley fever fungus) protein is Eukaryotic translation initiation factor 3 subunit D.